We begin with the raw amino-acid sequence, 62 residues long: Photosystem II reaction center X protein (62 aa).

The chain crosses the membrane as a helical span at residues 26-46; sequence IASFFAAALLIVIPAAAFLIF.

It belongs to the PsbX family. Type 2 subfamily. As to quaternary structure, PSII consists of a core antenna complex that captures photons, and an electron transfer chain that converts photonic excitation into a charge separation. PSII forms dimeric complexes.

The protein localises to the cellular thylakoid membrane. Functionally, involved in the binding and/or turnover of quinones at the Q(B) site of Photosystem II. The sequence is that of Photosystem II reaction center X protein from Prochlorococcus marinus subsp. pastoris (strain CCMP1986 / NIES-2087 / MED4).